Reading from the N-terminus, the 105-residue chain is Large ribosomal subunit protein uL24 (105 aa).

It belongs to the universal ribosomal protein uL24 family. As to quaternary structure, part of the 50S ribosomal subunit.

In terms of biological role, one of two assembly initiator proteins, it binds directly to the 5'-end of the 23S rRNA, where it nucleates assembly of the 50S subunit. One of the proteins that surrounds the polypeptide exit tunnel on the outside of the subunit. The polypeptide is Large ribosomal subunit protein uL24 (Wolbachia sp. subsp. Brugia malayi (strain TRS)).